The sequence spans 352 residues: Putative KilA-N domain-containing protein 006L (352 aa).

Positions 15–123 (TFYKGLFGDF…DKCNNIIINY (109 aa)) constitute a KilA-N domain. A coiled-coil region spans residues 129 to 236 (KTMDKKTLQS…KIDNIQNKLE (108 aa)).

It belongs to the IIV-6 006L/238R/313L/468L family.

In Acheta domesticus (House cricket), this protein is Putative KilA-N domain-containing protein 006L.